An 80-amino-acid chain; its full sequence is Cytochrome c oxidase subunit 7B, mitochondrial (80 aa).

The transit peptide at methionine 1–glutamine 24 directs the protein to the mitochondrion. Residues serine 25–threonine 32 lie on the Mitochondrial matrix side of the membrane. The helical transmembrane segment at phenylalanine 33–glutamine 59 threads the bilayer. Residues isoleucine 60–glutamine 80 are Mitochondrial intermembrane-facing.

The protein belongs to the cytochrome c oxidase VIIb family. Component of the cytochrome c oxidase (complex IV, CIV), a multisubunit enzyme composed of 14 subunits. The complex is composed of a catalytic core of 3 subunits MT-CO1, MT-CO2 and MT-CO3, encoded in the mitochondrial DNA, and 11 supernumerary subunits COX4I, COX5A, COX5B, COX6A, COX6B, COX6C, COX7A, COX7B, COX7C, COX8 and NDUFA4, which are encoded in the nuclear genome. The complex exists as a monomer or a dimer and forms supercomplexes (SCs) in the inner mitochondrial membrane with NADH-ubiquinone oxidoreductase (complex I, CI) and ubiquinol-cytochrome c oxidoreductase (cytochrome b-c1 complex, complex III, CIII), resulting in different assemblies (supercomplex SCI(1)III(2)IV(1) and megacomplex MCI(2)III(2)IV(2)).

It localises to the mitochondrion inner membrane. The protein operates within energy metabolism; oxidative phosphorylation. Its function is as follows. Component of the cytochrome c oxidase, the last enzyme in the mitochondrial electron transport chain which drives oxidative phosphorylation. The respiratory chain contains 3 multisubunit complexes succinate dehydrogenase (complex II, CII), ubiquinol-cytochrome c oxidoreductase (cytochrome b-c1 complex, complex III, CIII) and cytochrome c oxidase (complex IV, CIV), that cooperate to transfer electrons derived from NADH and succinate to molecular oxygen, creating an electrochemical gradient over the inner membrane that drives transmembrane transport and the ATP synthase. Cytochrome c oxidase is the component of the respiratory chain that catalyzes the reduction of oxygen to water. Electrons originating from reduced cytochrome c in the intermembrane space (IMS) are transferred via the dinuclear copper A center (CU(A)) of subunit 2 and heme A of subunit 1 to the active site in subunit 1, a binuclear center (BNC) formed by heme A3 and copper B (CU(B)). The BNC reduces molecular oxygen to 2 water molecules using 4 electrons from cytochrome c in the IMS and 4 protons from the mitochondrial matrix. Plays a role in proper central nervous system (CNS) development in vertebrates. This is Cytochrome c oxidase subunit 7B, mitochondrial (Cox7b) from Rattus norvegicus (Rat).